The sequence spans 420 residues: Acetyl-CoA acetyltransferase A, mitochondrial (420 aa).

Residues 1–33 (MAFCGTRTAARLSHSTRALHNTHRNFASQRTLN) constitute a mitochondrion transit peptide. Cys119 serves as the catalytic Acyl-thioester intermediate. CoA contacts are provided by residues Tyr212, 251-253 (RVD), and Lys256. Tyr212 lines the K(+) pocket. Positions 273 and 274 each coordinate K(+). Ser277 lines the CoA pocket. Val374 contributes to the K(+) binding site. Residue Cys406 is the Proton donor/acceptor of the active site.

It belongs to the thiolase-like superfamily. Thiolase family. In terms of assembly, homotetramer.

It localises to the mitochondrion. The catalysed reaction is 2 acetyl-CoA = acetoacetyl-CoA + CoA. The enzyme catalyses propanoyl-CoA + acetyl-CoA = 2-methyl-3-oxobutanoyl-CoA + CoA. It functions in the pathway lipid metabolism; fatty acid beta-oxidation. This is one of the enzymes that catalyzes the last step of the mitochondrial beta-oxidation pathway, an aerobic process breaking down fatty acids into acetyl-CoA. Using free coenzyme A/CoA, catalyzes the thiolytic cleavage of medium- to long-chain 3-oxoacyl-CoAs into acetyl-CoA and a fatty acyl-CoA shortened by two carbon atoms. The activity of the enzyme is reversible and it can also catalyze the condensation of two acetyl-CoA molecules into acetoacetyl-CoA. Thereby, it plays a major role in ketone body metabolism. This chain is Acetyl-CoA acetyltransferase A, mitochondrial (acat1-a), found in Xenopus laevis (African clawed frog).